We begin with the raw amino-acid sequence, 311 residues long: Beta-lactamase (311 aa).

The segment at residues 1–34 is a signal peptide (tat-type signal); it reads MRLTQAPPSRRTLMTLGAGATMAALLPAGGAAYA. Ser-87 functions as the Acyl-ester intermediate in the catalytic mechanism. A substrate-binding site is contributed by 255-257; that stretch reads KTG.

This sequence belongs to the class-A beta-lactamase family. Predicted to be exported by the Tat system. The position of the signal peptide cleavage has not been experimentally proven.

The catalysed reaction is a beta-lactam + H2O = a substituted beta-amino acid. The chain is Beta-lactamase (bla) from Kitasatospora aureofaciens (Streptomyces aureofaciens).